The primary structure comprises 433 residues: Serine carboxypeptidase-like 11 (433 aa).

Residues 1–21 form the signal peptide; sequence MELTLKLLVLLLFILNHHVGS. 3 cysteine pairs are disulfide-bonded: cysteine 80-cysteine 322, cysteine 243-cysteine 257, and cysteine 281-cysteine 288. An N-linked (GlcNAc...) asparagine glycan is attached at asparagine 101. Residue serine 176 is part of the active site. Asparagine 342 carries N-linked (GlcNAc...) asparagine glycosylation. Aspartate 358 is a catalytic residue. An N-linked (GlcNAc...) asparagine glycan is attached at asparagine 374. Residue histidine 411 is part of the active site.

It belongs to the peptidase S10 family. As to expression, ubiquitous.

The protein resides in the secreted. Functionally, probable carboxypeptidase. This is Serine carboxypeptidase-like 11 (SCPL11) from Arabidopsis thaliana (Mouse-ear cress).